Reading from the N-terminus, the 310-residue chain is tRNA dimethylallyltransferase (310 aa).

12 to 19 (GPTATGKT) is a binding site for ATP. 14 to 19 (TATGKT) provides a ligand contact to substrate. The interaction with substrate tRNA stretch occupies residues 37-40 (DSMM).

The protein belongs to the IPP transferase family. Monomer. The cofactor is Mg(2+).

It carries out the reaction adenosine(37) in tRNA + dimethylallyl diphosphate = N(6)-dimethylallyladenosine(37) in tRNA + diphosphate. Catalyzes the transfer of a dimethylallyl group onto the adenine at position 37 in tRNAs that read codons beginning with uridine, leading to the formation of N6-(dimethylallyl)adenosine (i(6)A). This Desulforudis audaxviator (strain MP104C) protein is tRNA dimethylallyltransferase.